The chain runs to 298 residues: Nitrogenase iron protein (298 aa).

13-20 (GKGGIGKS) is a binding site for ATP. Residue cysteine 101 coordinates [4Fe-4S] cluster. Arginine 104 carries the post-translational modification ADP-ribosylarginine; by dinitrogenase reductase ADP-ribosyltransferase. Residue cysteine 135 coordinates [4Fe-4S] cluster.

This sequence belongs to the NifH/BchL/ChlL family. In terms of assembly, homodimer. [4Fe-4S] cluster is required as a cofactor. In terms of processing, the reversible ADP-ribosylation of Arg-104 inactivates the nitrogenase reductase and regulates nitrogenase activity.

The catalysed reaction is N2 + 8 reduced [2Fe-2S]-[ferredoxin] + 16 ATP + 16 H2O = H2 + 8 oxidized [2Fe-2S]-[ferredoxin] + 2 NH4(+) + 16 ADP + 16 phosphate + 6 H(+). In terms of biological role, the key enzymatic reactions in nitrogen fixation are catalyzed by the nitrogenase complex, which has 2 components: the iron protein and the molybdenum-iron protein. The polypeptide is Nitrogenase iron protein (Cyanothece sp. (strain PCC 7425 / ATCC 29141)).